The chain runs to 459 residues: Sulfide:quinone oxidoreductase, mitochondrial (459 aa).

A mitochondrion-targeting transit peptide spans 1–24; that stretch reads MLTLNSTIKSVTGSFQSASMLARF. 35–39 provides a ligand contact to FAD; that stretch reads GGGSA. Active-site cysteine persulfide intermediate residues include C204 and C383.

The protein belongs to the SQRD family. Requires FAD as cofactor.

Its subcellular location is the mitochondrion. Catalyzes the oxidation of hydrogen sulfide, with the help of a quinone. In Schizosaccharomyces pombe (strain 972 / ATCC 24843) (Fission yeast), this protein is Sulfide:quinone oxidoreductase, mitochondrial (hmt2).